A 185-amino-acid polypeptide reads, in one-letter code: MIDEVLLDAEEKMEKAVTVARDDFATIRTGRANPGMFQRVVIDYYGTPTPITQVAGINVPEARMVVIKPYESNQLKAIEDAIRNSDLGLNPSNDGSIIRVAIPQLTEERRRELVKQAKGKGEDAKVTLRNIRRKANDELNRIKKDGEAGEDEVGRAEKDLDKTTAQYVSQIDELVKHKEGELLEV.

The protein belongs to the RRF family.

The protein localises to the cytoplasm. Its function is as follows. Responsible for the release of ribosomes from messenger RNA at the termination of protein biosynthesis. May increase the efficiency of translation by recycling ribosomes from one round of translation to another. The polypeptide is Ribosome-recycling factor (Mycobacteroides abscessus (strain ATCC 19977 / DSM 44196 / CCUG 20993 / CIP 104536 / JCM 13569 / NCTC 13031 / TMC 1543 / L948) (Mycobacterium abscessus)).